The sequence spans 101 residues: Urease subunit beta (101 aa).

This sequence belongs to the urease beta subunit family. Heterotrimer of UreA (gamma), UreB (beta) and UreC (alpha) subunits. Three heterotrimers associate to form the active enzyme.

The protein resides in the cytoplasm. It catalyses the reaction urea + 2 H2O + H(+) = hydrogencarbonate + 2 NH4(+). The protein operates within nitrogen metabolism; urea degradation; CO(2) and NH(3) from urea (urease route): step 1/1. This Granulibacter bethesdensis (strain ATCC BAA-1260 / CGDNIH1) protein is Urease subunit beta.